A 324-amino-acid chain; its full sequence is Phospho-N-acetylmuramoyl-pentapeptide-transferase (324 aa).

10 helical membrane-spanning segments follow: residues 5–25 (GLLV…PLFI), 52–72 (PTMG…IMAI), 77–97 (LGAE…IGFL), 122–142 (VIAI…YIMI), 149–169 (FELG…GSNA), 176–196 (LDGL…IIAV), 201–221 (FGVA…LVFN), 227–247 (VFMG…VAIL), 253–273 (LLVI…IQVI), and 302–322 (VVVT…YIGV).

The protein belongs to the glycosyltransferase 4 family. MraY subfamily. It depends on Mg(2+) as a cofactor.

Its subcellular location is the cell membrane. The enzyme catalyses UDP-N-acetyl-alpha-D-muramoyl-L-alanyl-gamma-D-glutamyl-meso-2,6-diaminopimeloyl-D-alanyl-D-alanine + di-trans,octa-cis-undecaprenyl phosphate = di-trans,octa-cis-undecaprenyl diphospho-N-acetyl-alpha-D-muramoyl-L-alanyl-D-glutamyl-meso-2,6-diaminopimeloyl-D-alanyl-D-alanine + UMP. The protein operates within cell wall biogenesis; peptidoglycan biosynthesis. Its function is as follows. Catalyzes the initial step of the lipid cycle reactions in the biosynthesis of the cell wall peptidoglycan: transfers peptidoglycan precursor phospho-MurNAc-pentapeptide from UDP-MurNAc-pentapeptide onto the lipid carrier undecaprenyl phosphate, yielding undecaprenyl-pyrophosphoryl-MurNAc-pentapeptide, known as lipid I. This Bacillus anthracis protein is Phospho-N-acetylmuramoyl-pentapeptide-transferase.